A 122-amino-acid polypeptide reads, in one-letter code: Large ribosomal subunit protein uL14 (122 aa).

The protein belongs to the universal ribosomal protein uL14 family. Part of the 50S ribosomal subunit. Forms a cluster with proteins L3 and L19. In the 70S ribosome, L14 and L19 interact and together make contacts with the 16S rRNA in bridges B5 and B8.

In terms of biological role, binds to 23S rRNA. Forms part of two intersubunit bridges in the 70S ribosome. This chain is Large ribosomal subunit protein uL14, found in Nostoc punctiforme (strain ATCC 29133 / PCC 73102).